Consider the following 428-residue polypeptide: GTPase Obg (428 aa).

An Obg domain is found at 1–158 (MFVDQVKIYV…RDVILELKVL (158 aa)). Residues 159–329 (ADVGLVGFPS…LLFEVANLIE (171 aa)) form the OBG-type G domain. GTP contacts are provided by residues 165–172 (GFPSVGKS), 190–194 (FTTIV), 212–215 (DLPG), 282–285 (NKMD), and 310–312 (SAV). 2 residues coordinate Mg(2+): serine 172 and threonine 192. The OCT domain occupies 350–428 (KFETEGVKFD…ILEYEFEFID (79 aa)).

This sequence belongs to the TRAFAC class OBG-HflX-like GTPase superfamily. OBG GTPase family. In terms of assembly, monomer. It depends on Mg(2+) as a cofactor.

It is found in the cytoplasm. An essential GTPase which binds GTP, GDP and possibly (p)ppGpp with moderate affinity, with high nucleotide exchange rates and a fairly low GTP hydrolysis rate. Plays a role in control of the cell cycle, stress response, ribosome biogenesis and in those bacteria that undergo differentiation, in morphogenesis control. In Bacillus cereus (strain AH820), this protein is GTPase Obg.